The following is a 187-amino-acid chain: Ribosome-recycling factor (187 aa).

Belongs to the RRF family.

The protein localises to the cytoplasm. Responsible for the release of ribosomes from messenger RNA at the termination of protein biosynthesis. May increase the efficiency of translation by recycling ribosomes from one round of translation to another. The polypeptide is Ribosome-recycling factor (Rhodopseudomonas palustris (strain HaA2)).